Here is a 128-residue protein sequence, read N- to C-terminus: Aspartate 1-decarboxylase (128 aa).

The Schiff-base intermediate with substrate; via pyruvic acid role is filled by serine 25. Residue serine 25 is modified to Pyruvic acid (Ser). Residue threonine 57 coordinates substrate. The active-site Proton donor is tyrosine 58. 73–75 (GAA) serves as a coordination point for substrate.

This sequence belongs to the PanD family. Heterooctamer of four alpha and four beta subunits. Requires pyruvate as cofactor. Is synthesized initially as an inactive proenzyme, which is activated by self-cleavage at a specific serine bond to produce a beta-subunit with a hydroxyl group at its C-terminus and an alpha-subunit with a pyruvoyl group at its N-terminus.

It localises to the cytoplasm. The enzyme catalyses L-aspartate + H(+) = beta-alanine + CO2. Its pathway is cofactor biosynthesis; (R)-pantothenate biosynthesis; beta-alanine from L-aspartate: step 1/1. In terms of biological role, catalyzes the pyruvoyl-dependent decarboxylation of aspartate to produce beta-alanine. The sequence is that of Aspartate 1-decarboxylase from Staphylococcus epidermidis (strain ATCC 35984 / DSM 28319 / BCRC 17069 / CCUG 31568 / BM 3577 / RP62A).